The sequence spans 495 residues: Glutamyl-tRNA(Gln) amidotransferase subunit A (495 aa).

Residues K75 and S150 each act as charge relay system in the active site. The active-site Acyl-ester intermediate is S174.

This sequence belongs to the amidase family. GatA subfamily. In terms of assembly, heterotrimer of A, B and C subunits.

It catalyses the reaction L-glutamyl-tRNA(Gln) + L-glutamine + ATP + H2O = L-glutaminyl-tRNA(Gln) + L-glutamate + ADP + phosphate + H(+). In terms of biological role, allows the formation of correctly charged Gln-tRNA(Gln) through the transamidation of misacylated Glu-tRNA(Gln) in organisms which lack glutaminyl-tRNA synthetase. The reaction takes place in the presence of glutamine and ATP through an activated gamma-phospho-Glu-tRNA(Gln). The polypeptide is Glutamyl-tRNA(Gln) amidotransferase subunit A (Ralstonia nicotianae (strain ATCC BAA-1114 / GMI1000) (Ralstonia solanacearum)).